A 199-amino-acid polypeptide reads, in one-letter code: NADH-quinone oxidoreductase subunit C (199 aa).

It belongs to the complex I 30 kDa subunit family. NDH-1 is composed of 14 different subunits. Subunits NuoB, C, D, E, F, and G constitute the peripheral sector of the complex.

The protein localises to the cell inner membrane. The catalysed reaction is a quinone + NADH + 5 H(+)(in) = a quinol + NAD(+) + 4 H(+)(out). In terms of biological role, NDH-1 shuttles electrons from NADH, via FMN and iron-sulfur (Fe-S) centers, to quinones in the respiratory chain. The immediate electron acceptor for the enzyme in this species is believed to be ubiquinone. Couples the redox reaction to proton translocation (for every two electrons transferred, four hydrogen ions are translocated across the cytoplasmic membrane), and thus conserves the redox energy in a proton gradient. The sequence is that of NADH-quinone oxidoreductase subunit C from Rhodopseudomonas palustris (strain BisB18).